The primary structure comprises 174 residues: Alpha-crystallin B chain (174 aa).

Met-1 bears the N-acetylmethionine mark. Residues 55-163 form the sHSP domain; the sequence is RMPSWLETGL…PERSIPITRE (109 aa). Zn(2+) is bound by residues His-82, His-103, Glu-105, and His-110. The segment at 148-174 is disordered; the sequence is RKQSDVPERSIPITREEKPAIAGSQRK. Residues 149-166 are compositionally biased toward basic and acidic residues; that stretch reads KQSDVPERSIPITREEKP.

Belongs to the small heat shock protein (HSP20) family. As to quaternary structure, heteromer composed of three CRYAA and one CRYAB subunits. Aggregates with homologous proteins, including the small heat shock protein HSPB1, to form large heteromeric complexes. Inter-subunit bridging via zinc ions enhances stability, which is crucial as there is no protein turn over in the lens. Lens as well as other tissues.

Functionally, may contribute to the transparency and refractive index of the lens. The polypeptide is Alpha-crystallin B chain (CRYAB) (Gallus gallus (Chicken)).